Consider the following 198-residue polypeptide: Holliday junction branch migration complex subunit RuvA (198 aa).

Residues 1–63 (MIALLTGQIA…EDAIQLYGFR (63 aa)) are domain I. A domain II region spans residues 64-142 (TSLEKSFFQL…KLDLSSVVVP (79 aa)). Residues 143–153 (EPRQMPEDDLL) are flexible linker. Positions 153–198 (LEDVVSALLNLGYKEPQVRKVLAGLNPGSDASLEGVLKQALKSLMR) are domain III.

It belongs to the RuvA family. Homotetramer. Forms an RuvA(8)-RuvB(12)-Holliday junction (HJ) complex. HJ DNA is sandwiched between 2 RuvA tetramers; dsDNA enters through RuvA and exits via RuvB. An RuvB hexamer assembles on each DNA strand where it exits the tetramer. Each RuvB hexamer is contacted by two RuvA subunits (via domain III) on 2 adjacent RuvB subunits; this complex drives branch migration. In the full resolvosome a probable DNA-RuvA(4)-RuvB(12)-RuvC(2) complex forms which resolves the HJ.

Its subcellular location is the cytoplasm. Its function is as follows. The RuvA-RuvB-RuvC complex processes Holliday junction (HJ) DNA during genetic recombination and DNA repair, while the RuvA-RuvB complex plays an important role in the rescue of blocked DNA replication forks via replication fork reversal (RFR). RuvA specifically binds to HJ cruciform DNA, conferring on it an open structure. The RuvB hexamer acts as an ATP-dependent pump, pulling dsDNA into and through the RuvAB complex. HJ branch migration allows RuvC to scan DNA until it finds its consensus sequence, where it cleaves and resolves the cruciform DNA. The polypeptide is Holliday junction branch migration complex subunit RuvA (Pelobacter propionicus (strain DSM 2379 / NBRC 103807 / OttBd1)).